Consider the following 466-residue polypeptide: MASEGDKMLGGRFVGSTDPVMEMLSASITIDQRLAEVDIQGSMAYAKALEKAGILSKSELEKTLSGLEKISEEWSKGVFVVTPTDEDIHTANERRLKELIGDIAGKLHTGRSRNDQVVTDLKLFMKNSLSVISTHLLQLIKTLVERAAIEVDVILPGYTHLQKTQPIRWSQFLLSHAVALTRDSERLGEIKKRINILPLGSGALAGNPLEIDRELLRSELDFASISLNSMDAVRQRDSVVEFLSVAALLMIHLSKMAEDLIIYSTSEFGFLTLSDTYCTGSSVMPQKKNPDSLELIRSKAGRVFGRLAAILMVLKGLPSTYNKDLQEDKEAVFDVVDTLNAVLQVATGVISTLQINKENMEKALSPEILSSDLALYLVHKGMPFRQAHVASGKAVHLAESKGITLNNLSLDDLKSISPLFGSDVSQVFNVVNSVEQYTALGGTAKSSVTAQIEQLRELLKRHKEQA.

Positions 27, 114, and 159 each coordinate 2-(N(omega)-L-arginino)succinate. The active-site Proton acceptor is the His160. Residue Ser281 is the Proton donor of the active site. The 2-(N(omega)-L-arginino)succinate site is built by Asn289, Tyr321, Gln326, and Lys329.

It belongs to the lyase 1 family. Argininosuccinate lyase subfamily. Homotetramer. The N-terminus is blocked. As to expression, eye lens.

It catalyses the reaction 2-(N(omega)-L-arginino)succinate = fumarate + L-arginine. It functions in the pathway amino-acid biosynthesis; L-arginine biosynthesis; L-arginine from L-ornithine and carbamoyl phosphate: step 3/3. In terms of biological role, delta crystallin, the principal crystallin in embryonic lens, is found only in birds and reptiles. This protein also functions as an enzymatically active argininosuccinate lyase, but it has a low activity. In Columba livia (Rock dove), this protein is Argininosuccinate lyase (ASL).